The chain runs to 403 residues: D-alanyl-D-alanine carboxypeptidase DacA (403 aa).

A signal peptide spans 1–29 (MNTIFSARIMKRLALTTALCTAFISAAHA). Serine 73 serves as the catalytic Acyl-ester intermediate. Lysine 76 acts as the Proton acceptor in catalysis. Serine 139 is an active-site residue. Lysine 242 provides a ligand contact to substrate.

It belongs to the peptidase S11 family.

It localises to the cell inner membrane. The enzyme catalyses Preferential cleavage: (Ac)2-L-Lys-D-Ala-|-D-Ala. Also transpeptidation of peptidyl-alanyl moieties that are N-acyl substituents of D-alanine.. The protein operates within cell wall biogenesis; peptidoglycan biosynthesis. In terms of biological role, removes C-terminal D-alanyl residues from sugar-peptide cell wall precursors. The protein is D-alanyl-D-alanine carboxypeptidase DacA (dacA) of Escherichia coli O157:H7.